The primary structure comprises 65 residues: Large ribosomal subunit protein bL35 (65 aa).

The segment at 1–23 is disordered; that stretch reads MPKIKTNRGAAKRFKKTGTGKVK. Positions 10-23 are enriched in basic residues; that stretch reads AAKRFKKTGTGKVK.

This sequence belongs to the bacterial ribosomal protein bL35 family.

The protein is Large ribosomal subunit protein bL35 of Trichlorobacter lovleyi (strain ATCC BAA-1151 / DSM 17278 / SZ) (Geobacter lovleyi).